The sequence spans 341 residues: MTDIVYDKDADLSLIQGRKVAVIGYGSQGHAHALNLRDSGVEVVIGLKEGSTSRAKAEEQGFTVKTPSDASAWADVIVILAPDQHQRGLYADSVRDNLTEGKTLVFAHGFNIRFGYIEAPEGVDVVLVAPKGPGHTVRREFEAGRGVPVIVAVEVDASGKAWDLAWSYAKGIGGLRAGGIRTTFTEETETDLFGEQAVLCGGTSQLVQYGFETLMEAGYQPQIAYFEVLHELKLIVDLMWEGGIAKQRWSISDTAEYGDYVSGPRVISPDVKENMKAVLADIQSGAFADRFIKDQDAGAPEFLELRKKGEEHPIESTGRELRKLFAWNKADDDYTDGSVAR.

The 181-residue stretch at 2–182 folds into the KARI N-terminal Rossmann domain; sequence TDIVYDKDAD…GGLRAGGIRT (181 aa). NADP(+) is bound by residues 25–28, K48, S51, S53, and 83–86; these read YGSQ and DQHQ. The active site involves H108. NADP(+) is bound at residue G134. The 146-residue stretch at 183 to 328 folds into the KARI C-terminal knotted domain; the sequence is TFTEETETDL…RELRKLFAWN (146 aa). Residues D191, E195, E227, and E231 each contribute to the Mg(2+) site. S252 is a binding site for substrate.

The protein belongs to the ketol-acid reductoisomerase family. It depends on Mg(2+) as a cofactor.

It carries out the reaction (2R)-2,3-dihydroxy-3-methylbutanoate + NADP(+) = (2S)-2-acetolactate + NADPH + H(+). It catalyses the reaction (2R,3R)-2,3-dihydroxy-3-methylpentanoate + NADP(+) = (S)-2-ethyl-2-hydroxy-3-oxobutanoate + NADPH + H(+). Its pathway is amino-acid biosynthesis; L-isoleucine biosynthesis; L-isoleucine from 2-oxobutanoate: step 2/4. It functions in the pathway amino-acid biosynthesis; L-valine biosynthesis; L-valine from pyruvate: step 2/4. Involved in the biosynthesis of branched-chain amino acids (BCAA). Catalyzes an alkyl-migration followed by a ketol-acid reduction of (S)-2-acetolactate (S2AL) to yield (R)-2,3-dihydroxy-isovalerate. In the isomerase reaction, S2AL is rearranged via a Mg-dependent methyl migration to produce 3-hydroxy-3-methyl-2-ketobutyrate (HMKB). In the reductase reaction, this 2-ketoacid undergoes a metal-dependent reduction by NADPH to yield (R)-2,3-dihydroxy-isovalerate. The protein is Ketol-acid reductoisomerase (NADP(+)) of Clavibacter michiganensis subsp. michiganensis (strain NCPPB 382).